The chain runs to 588 residues: Aspartate--tRNA ligase (588 aa).

Glutamate 177 is a binding site for L-aspartate. An aspartate region spans residues 201-204 (QLFK). Arginine 223 contributes to the L-aspartate binding site. Residues 223–225 (RDE) and glutamine 232 each bind ATP. Histidine 451 is an L-aspartate binding site. Glutamate 485 serves as a coordination point for ATP. Residue arginine 492 participates in L-aspartate binding. 537–540 (GLDR) is an ATP binding site.

It belongs to the class-II aminoacyl-tRNA synthetase family. Type 1 subfamily. Homodimer.

Its subcellular location is the cytoplasm. It catalyses the reaction tRNA(Asp) + L-aspartate + ATP = L-aspartyl-tRNA(Asp) + AMP + diphosphate. Its function is as follows. Catalyzes the attachment of L-aspartate to tRNA(Asp) in a two-step reaction: L-aspartate is first activated by ATP to form Asp-AMP and then transferred to the acceptor end of tRNA(Asp). The polypeptide is Aspartate--tRNA ligase (Staphylococcus aureus (strain Newman)).